The primary structure comprises 390 residues: Protein-glutamate methylesterase/protein-glutamine glutaminase (390 aa).

In terms of domain architecture, Response regulatory spans 4 to 121 (RALVVDDSGF…SGDMEQVKRQ (118 aa)). D55 carries the 4-aspartylphosphate modification. The segment at 130–198 (GGGRGAPAGR…AAPAPERGQR (69 aa)) is disordered. Low complexity-rich tracts occupy residues 136-148 (PAGR…APVD) and 179-193 (EAPV…APAP). The 190-residue stretch at 201 to 390 (PGALRLVVIG…QVGEELAKLR (190 aa)) folds into the CheB-type methylesterase domain. Catalysis depends on residues S212, H239, and D335.

This sequence belongs to the CheB family. In terms of processing, phosphorylated by CheA. Phosphorylation of the N-terminal regulatory domain activates the methylesterase activity.

The protein resides in the cytoplasm. It catalyses the reaction [protein]-L-glutamate 5-O-methyl ester + H2O = L-glutamyl-[protein] + methanol + H(+). The enzyme catalyses L-glutaminyl-[protein] + H2O = L-glutamyl-[protein] + NH4(+). Involved in chemotaxis. Part of a chemotaxis signal transduction system that modulates chemotaxis in response to various stimuli. Catalyzes the demethylation of specific methylglutamate residues introduced into the chemoreceptors (methyl-accepting chemotaxis proteins or MCP) by CheR. Also mediates the irreversible deamidation of specific glutamine residues to glutamic acid. The polypeptide is Protein-glutamate methylesterase/protein-glutamine glutaminase (Alkalilimnicola ehrlichii (strain ATCC BAA-1101 / DSM 17681 / MLHE-1)).